The sequence spans 941 residues: DNA mismatch repair protein MutS (941 aa).

613-620 (GPNMAGKS) is a binding site for ATP.

This sequence belongs to the DNA mismatch repair MutS family.

This protein is involved in the repair of mismatches in DNA. It is possible that it carries out the mismatch recognition step. This protein has a weak ATPase activity. The sequence is that of DNA mismatch repair protein MutS from Clostridium botulinum (strain Alaska E43 / Type E3).